The chain runs to 418 residues: Gamma-glutamyl phosphate reductase (418 aa).

This sequence belongs to the gamma-glutamyl phosphate reductase family.

Its subcellular location is the cytoplasm. The catalysed reaction is L-glutamate 5-semialdehyde + phosphate + NADP(+) = L-glutamyl 5-phosphate + NADPH + H(+). Its pathway is amino-acid biosynthesis; L-proline biosynthesis; L-glutamate 5-semialdehyde from L-glutamate: step 2/2. In terms of biological role, catalyzes the NADPH-dependent reduction of L-glutamate 5-phosphate into L-glutamate 5-semialdehyde and phosphate. The product spontaneously undergoes cyclization to form 1-pyrroline-5-carboxylate. This Desulfotalea psychrophila (strain LSv54 / DSM 12343) protein is Gamma-glutamyl phosphate reductase.